The primary structure comprises 122 residues: MKAERPDTRKLKALKRGHIAEYRAALCLMLKGYRIVAMRYRTRLGEIDIIARRGDLVACVEVKARVSLEDAVFAVTDTAQRRIRAASDLWLSRQGDFHRLSVRYDIVAVTPWRWPRHLPDAF.

Belongs to the UPF0102 family.

The protein is UPF0102 protein R00337 of Rhizobium meliloti (strain 1021) (Ensifer meliloti).